The primary structure comprises 144 residues: Large ribosomal subunit protein uL15 (144 aa).

A disordered region spans residues 1-58; sequence MNLSNLRAPRKANEKKKRVGRGMGSGMGKTSARGHKGQRSRSGSRMMRGFEGGQMPLH. A compositionally biased stretch (basic residues) spans 8-20; sequence APRKANEKKKRVG. The span at 40 to 49 shows a compositional bias: low complexity; it reads SRSGSRMMRG.

This sequence belongs to the universal ribosomal protein uL15 family. Part of the 50S ribosomal subunit.

In terms of biological role, binds to the 23S rRNA. This Koribacter versatilis (strain Ellin345) protein is Large ribosomal subunit protein uL15.